A 436-amino-acid chain; its full sequence is Trigger factor (436 aa).

Residues 161 to 246 (GMRVTMDFIG…LIKVEEQILP (86 aa)) enclose the PPIase FKBP-type domain.

This sequence belongs to the FKBP-type PPIase family. Tig subfamily.

The protein resides in the cytoplasm. The catalysed reaction is [protein]-peptidylproline (omega=180) = [protein]-peptidylproline (omega=0). Involved in protein export. Acts as a chaperone by maintaining the newly synthesized protein in an open conformation. Functions as a peptidyl-prolyl cis-trans isomerase. In Aeromonas salmonicida (strain A449), this protein is Trigger factor.